The primary structure comprises 247 residues: Protein Thf1 (247 aa).

A coiled-coil region spans residues 198–224 (IAQVRQAMDDILEAQKKRREADQAKKE). Positions 209–247 (LEAQKKRREADQAKKEGSDDTPTTEASTPDSEPTSEVSS) are disordered. A compositionally biased stretch (basic and acidic residues) spans 210-226 (EAQKKRREADQAKKEGS). Polar residues predominate over residues 228 to 247 (DTPTTEASTPDSEPTSEVSS).

Belongs to the THF1 family.

In terms of biological role, may be involved in photosynthetic membrane biogenesis. The protein is Protein Thf1 of Acaryochloris marina (strain MBIC 11017).